The following is a 183-amino-acid chain: A-type ATP synthase subunit E (183 aa).

Belongs to the V-ATPase E subunit family. In terms of assembly, has multiple subunits, A(3), B(3), C, D, E, F, G, I and K(x); there may be a few other subunits as well.

The protein localises to the cell membrane. Component of the A-type ATP synthase that produces ATP from ADP in the presence of a proton gradient across the membrane. The chain is A-type ATP synthase subunit E from Methanosarcina mazei (strain ATCC BAA-159 / DSM 3647 / Goe1 / Go1 / JCM 11833 / OCM 88) (Methanosarcina frisia).